We begin with the raw amino-acid sequence, 412 residues long: Flap endonuclease 1-B (412 aa).

Positions 1–105 are N-domain; that stretch reads MGIKGLTKLL…KELAKRSLKR (105 aa). D34 is a Mg(2+) binding site. R71 provides a ligand contact to DNA. Residues D87, E159, E161, D180, and D182 each coordinate Mg(2+). The tract at residues 123–254 is I-domain; it reads LIEKFSKRTV…QRALKLIRQH (132 aa). Position 159 (E159) interacts with DNA. Residues G232 and D234 each coordinate DNA. D234 contacts Mg(2+).

Belongs to the XPG/RAD2 endonuclease family. FEN1 subfamily. In terms of assembly, interacts with PCNA. Three molecules of FEN1 bind to one PCNA trimer with each molecule binding to one PCNA monomer. PCNA stimulates the nuclease activity without altering cleavage specificity. It depends on Mg(2+) as a cofactor. Post-translationally, phosphorylated. Phosphorylation upon DNA damage induces relocalization to the nuclear plasma.

It localises to the nucleus. It is found in the nucleolus. The protein localises to the nucleoplasm. Its subcellular location is the mitochondrion. Structure-specific nuclease with 5'-flap endonuclease and 5'-3' exonuclease activities involved in DNA replication and repair. During DNA replication, cleaves the 5'-overhanging flap structure that is generated by displacement synthesis when DNA polymerase encounters the 5'-end of a downstream Okazaki fragment. It enters the flap from the 5'-end and then tracks to cleave the flap base, leaving a nick for ligation. Also involved in the long patch base excision repair (LP-BER) pathway, by cleaving within the apurinic/apyrimidinic (AP) site-terminated flap. Acts as a genome stabilization factor that prevents flaps from equilibrating into structures that lead to duplications and deletions. Also possesses 5'-3' exonuclease activity on nicked or gapped double-stranded DNA, and exhibits RNase H activity. Also involved in replication and repair of rDNA and in repairing mitochondrial DNA. The sequence is that of Flap endonuclease 1-B from Oryza sativa subsp. indica (Rice).